Consider the following 450-residue polypeptide: Regulator of sigma E protease (450 aa).

Position 22 (H22) interacts with Zn(2+). The active site involves E23. H26 provides a ligand contact to Zn(2+). Residues 98-120 (AAIIAAGPVANFIFAIFAYWLVF) traverse the membrane as a helical segment. PDZ domains are found at residues 115 to 186 (AYWL…APFG) and 199 to 291 (HWAF…TPDT). The next 2 membrane-spanning stretches (helical) occupy residues 376–398 (VIYY…LFPL) and 426–445 (FSYR…ALFN).

This sequence belongs to the peptidase M50B family. In terms of assembly, interacts with RseA. The cofactor is Zn(2+).

The protein localises to the cell inner membrane. Functionally, a site-2 regulated intramembrane protease (S2P) that cleaves the peptide bond between 'Ala-108' and 'Cys-109' in the transmembrane region of RseA. Part of a regulated intramembrane proteolysis (RIP) cascade. Acts on DegS-cleaved RseA to release the cytoplasmic domain of RseA. This provides the cell with sigma-E (RpoE) activity through the proteolysis of RseA. This chain is Regulator of sigma E protease (rseP), found in Salmonella typhi.